The primary structure comprises 159 residues: uncharacterized protein (159 aa).

The next 3 membrane-spanning stretches (helical) occupy residues 16–36 (IVLP…AFIF), 84–104 (VYAG…LLII), and 112–132 (VFFY…LLPV).

Its subcellular location is the cell membrane. This is an uncharacterized protein from Bacillus subtilis (strain 168).